The sequence spans 125 residues: Prepro-urotensin II-gamma (125 aa).

Positions 1–21 (MMCNLLLSCSVLLLSCSHLLA) are cleaved as a signal peptide. The propeptide occupies 109–111 (QFR). A disulfide bridge connects residues Cys-119 and Cys-124.

This sequence belongs to the urotensin-2 family.

The protein localises to the secreted. Urotensin is found in the teleost caudal neurosecretory system. It has a suggested role in osmoregulation and as a corticotropin-releasing factor. The non-hormonal portion of this precursor may be a urotensin binding protein, urophysin. The sequence is that of Prepro-urotensin II-gamma from Cyprinus carpio (Common carp).